We begin with the raw amino-acid sequence, 98 residues long: NADH-ubiquinone oxidoreductase chain 4L (98 aa).

The next 3 helical transmembrane spans lie at 1 to 21, 29 to 49, and 61 to 81; these read MSMV…GLLI, SLLC…VTIL, and IILL…LVMV.

Belongs to the complex I subunit 4L family. As to quaternary structure, core subunit of respiratory chain NADH dehydrogenase (Complex I) which is composed of 45 different subunits.

It localises to the mitochondrion inner membrane. The catalysed reaction is a ubiquinone + NADH + 5 H(+)(in) = a ubiquinol + NAD(+) + 4 H(+)(out). Core subunit of the mitochondrial membrane respiratory chain NADH dehydrogenase (Complex I) which catalyzes electron transfer from NADH through the respiratory chain, using ubiquinone as an electron acceptor. Part of the enzyme membrane arm which is embedded in the lipid bilayer and involved in proton translocation. This Taxidea taxus (American badger) protein is NADH-ubiquinone oxidoreductase chain 4L (MT-ND4L).